Here is a 296-residue protein sequence, read N- to C-terminus: Nucleotide-binding protein SZO_12220 (296 aa).

13-20 (GMSGAGKT) contacts ATP. 63–66 (DMRS) lines the GTP pocket.

This sequence belongs to the RapZ-like family.

Functionally, displays ATPase and GTPase activities. In Streptococcus equi subsp. zooepidemicus (strain H70), this protein is Nucleotide-binding protein SZO_12220.